Consider the following 489-residue polypeptide: MQAKQQLLIDGAWVDGDAARFAKTDPVSGETLWTATAASATQVEHAVAAARQAFPDWARRSFAERQAVVERFRECLETHREHLATAIAQETGKPLWEARTEVGAMIGKVAISITAYHERTGERARDIGDARAVLRHRPHGVLAVYGPYNFPGHLPNGHIVPALLAGNAVVFKPSEQTPMTADLTLQCWLEAGLPAGVINLVQGAAEVGQALAGSADIDGLLFTGSAKVGGLLHRQFGGQVDKILALELGGNNPLVVKDVPDREAAVLSILQSAFASGGQRCTCARRLIVPHGAVGDDLIDALTSAIAELRVAAPFSEPAPFYAGLTSVEAADGLLAAQDDLVARGGRPLSRMRRLQAGTSLLSPGLIDVTGCDVPDEEHFGPLLKVHRYRDWDEAIALANDTRYGLSAGLIGGERADWDDFLLRIRAGIVNWNRQTTGASSDAPFGGIGDSGNHRPSAYYAADYCAYPVASMEAETLVLPETLPPGVVL.

224–229 is a binding site for NAD(+); the sequence is GSAKVG. Residues glutamate 247 and cysteine 281 contribute to the active site.

It belongs to the aldehyde dehydrogenase family. AstD subfamily.

It catalyses the reaction N-succinyl-L-glutamate 5-semialdehyde + NAD(+) + H2O = N-succinyl-L-glutamate + NADH + 2 H(+). It functions in the pathway amino-acid degradation; L-arginine degradation via AST pathway; L-glutamate and succinate from L-arginine: step 4/5. Its function is as follows. Catalyzes the NAD-dependent reduction of succinylglutamate semialdehyde into succinylglutamate. The polypeptide is N-succinylglutamate 5-semialdehyde dehydrogenase (Chromohalobacter salexigens (strain ATCC BAA-138 / DSM 3043 / CIP 106854 / NCIMB 13768 / 1H11)).